Consider the following 235-residue polypeptide: Ribonuclease 3 (235 aa).

The RNase III domain maps to 11–137 (RAWCAEALGY…VVGALYLDGG (127 aa)). E51 provides a ligand contact to Mg(2+). D55 is an active-site residue. Mg(2+) is bound by residues D123 and E126. E126 is an active-site residue. A DRBM domain is found at 164–233 (DYKTQLQEQL…ARQALMPEHH (70 aa)).

It belongs to the ribonuclease III family. Homodimer. Mg(2+) is required as a cofactor.

The protein resides in the cytoplasm. It carries out the reaction Endonucleolytic cleavage to 5'-phosphomonoester.. Its function is as follows. Digests double-stranded RNA. Involved in the processing of primary rRNA transcript to yield the immediate precursors to the large and small rRNAs (23S and 16S). Processes some mRNAs, and tRNAs when they are encoded in the rRNA operon. Processes pre-crRNA and tracrRNA of type II CRISPR loci if present in the organism. The polypeptide is Ribonuclease 3 (Symbiobacterium thermophilum (strain DSM 24528 / JCM 14929 / IAM 14863 / T)).